The sequence spans 115 residues: Histone H2A.Z-specific chaperone chz1 (115 aa).

Over residues 1–11 the composition is skewed to polar residues; sequence MSESNQATFQG. A disordered region spans residues 1–115; that stretch reads MSESNQATFQ…DDEDFKPSDK (115 aa). A compositionally biased stretch (low complexity) spans 13 to 22; that stretch reads DPAAHAPDAA. A compositionally biased stretch (basic and acidic residues) spans 23–33; it reads AYDKGKGKAVE. 2 stretches are compositionally biased toward acidic residues: residues 34–64 and 98–109; these read DMDV…DGDS and DEMDDEEDDDED.

The protein belongs to the CHZ1 family. As to quaternary structure, forms a heterotrimer with H2A.Z-H2B, stabilizing the association of the histone dimer. Also, with a lower affinity, forms a heterotrimer with H2A-H2B.

It is found in the nucleus. Its function is as follows. Forms a chaperone-bound H2A.Z-H2B complex that acts as a source for SWR1 complex-dependent H2A to H2A.Z histone replacement in chromatin. The polypeptide is Histone H2A.Z-specific chaperone chz1 (chz1) (Emericella nidulans (strain FGSC A4 / ATCC 38163 / CBS 112.46 / NRRL 194 / M139) (Aspergillus nidulans)).